The following is a 155-amino-acid chain: Protein archease-like (155 aa).

D26, D154, and I155 together coordinate Ca(2+).

Belongs to the archease family.

In terms of biological role, component of the tRNA-splicing ligase complex required to facilitate the enzymatic turnover of catalytic subunit RtcB. The sequence is that of Protein archease-like from Caenorhabditis briggsae.